The sequence spans 610 residues: Dihydroxy-acid dehydratase (610 aa).

Mg(2+) is bound at residue D81. C122 contributes to the [2Fe-2S] cluster binding site. Residues D123 and K124 each contribute to the Mg(2+) site. Position 124 is an N6-carboxylysine (K124). [2Fe-2S] cluster is bound at residue C193. E489 contributes to the Mg(2+) binding site. The active-site Proton acceptor is S515.

Belongs to the IlvD/Edd family. As to quaternary structure, homodimer. It depends on [2Fe-2S] cluster as a cofactor. Mg(2+) is required as a cofactor.

It carries out the reaction (2R)-2,3-dihydroxy-3-methylbutanoate = 3-methyl-2-oxobutanoate + H2O. The enzyme catalyses (2R,3R)-2,3-dihydroxy-3-methylpentanoate = (S)-3-methyl-2-oxopentanoate + H2O. It participates in amino-acid biosynthesis; L-isoleucine biosynthesis; L-isoleucine from 2-oxobutanoate: step 3/4. The protein operates within amino-acid biosynthesis; L-valine biosynthesis; L-valine from pyruvate: step 3/4. Functions in the biosynthesis of branched-chain amino acids. Catalyzes the dehydration of (2R,3R)-2,3-dihydroxy-3-methylpentanoate (2,3-dihydroxy-3-methylvalerate) into 2-oxo-3-methylpentanoate (2-oxo-3-methylvalerate) and of (2R)-2,3-dihydroxy-3-methylbutanoate (2,3-dihydroxyisovalerate) into 2-oxo-3-methylbutanoate (2-oxoisovalerate), the penultimate precursor to L-isoleucine and L-valine, respectively. This is Dihydroxy-acid dehydratase from Xylella fastidiosa (strain M12).